A 133-amino-acid polypeptide reads, in one-letter code: Cytochrome c-type biogenesis protein CcmE (133 aa).

The Cytoplasmic segment spans residues 1-7 (MKRKHKR). A helical; Signal-anchor for type II membrane protein membrane pass occupies residues 8-28 (LLFIIVTFIIFGSSVVIVLNK). The Periplasmic segment spans residues 29 to 133 (LRSNISFFFT…NYKPGKYRAK (105 aa)). The heme site is built by H121 and Y125.

The protein belongs to the CcmE/CycJ family.

It is found in the cell inner membrane. Heme chaperone required for the biogenesis of c-type cytochromes. Transiently binds heme delivered by CcmC and transfers the heme to apo-cytochromes in a process facilitated by CcmF and CcmH. The polypeptide is Cytochrome c-type biogenesis protein CcmE (Ehrlichia canis (strain Jake)).